A 108-amino-acid polypeptide reads, in one-letter code: UPF0060 membrane protein DSY4157 (108 aa).

A run of 4 helical transmembrane segments spans residues 6–26, 31–51, 60–80, and 86–106; these read ILFI…WLWL, PYWY…IPTL, VYAA…WGVD, and TYDW…LWAP.

This sequence belongs to the UPF0060 family.

Its subcellular location is the cell membrane. The protein is UPF0060 membrane protein DSY4157 of Desulfitobacterium hafniense (strain Y51).